The primary structure comprises 211 residues: Protein-L-isoaspartate O-methyltransferase 2 (211 aa).

S61 is a catalytic residue.

It belongs to the methyltransferase superfamily. L-isoaspartyl/D-aspartyl protein methyltransferase family.

The protein localises to the cytoplasm. The enzyme catalyses [protein]-L-isoaspartate + S-adenosyl-L-methionine = [protein]-L-isoaspartate alpha-methyl ester + S-adenosyl-L-homocysteine. Functionally, catalyzes the methyl esterification of L-isoaspartyl residues in peptides and proteins that result from spontaneous decomposition of normal L-aspartyl and L-asparaginyl residues. It plays a role in the repair and/or degradation of damaged proteins. In Polaromonas sp. (strain JS666 / ATCC BAA-500), this protein is Protein-L-isoaspartate O-methyltransferase 2.